We begin with the raw amino-acid sequence, 170 residues long: MAVRFIREDGDEILRKVSKKVDVIDERIKTLLDDMAETMYAANGVGLAAPQVGVLKRVVVIDVGDGLMELINPEIVEQEGEQIDIEGCLSIPGVAGEVKRPARVVVEALNREGEKITVEGKELLAVALCHEIDHLDGILFTDKVIRFIDEDEMERRRENKRRNKIRQNKG.

Fe cation is bound by residues C88 and H130. E131 is a catalytic residue. H134 serves as a coordination point for Fe cation.

It belongs to the polypeptide deformylase family. It depends on Fe(2+) as a cofactor.

The enzyme catalyses N-terminal N-formyl-L-methionyl-[peptide] + H2O = N-terminal L-methionyl-[peptide] + formate. In terms of biological role, removes the formyl group from the N-terminal Met of newly synthesized proteins. Requires at least a dipeptide for an efficient rate of reaction. N-terminal L-methionine is a prerequisite for activity but the enzyme has broad specificity at other positions. The chain is Peptide deformylase from Acetivibrio thermocellus (strain ATCC 27405 / DSM 1237 / JCM 9322 / NBRC 103400 / NCIMB 10682 / NRRL B-4536 / VPI 7372) (Clostridium thermocellum).